Reading from the N-terminus, the 828-residue chain is Periplasmic nitrate reductase (828 aa).

A signal peptide (tat-type signal) is located at residues 1 to 31 (MKLSRRHFMKANAVAAAAAVAGITIPIAVRA). A 4Fe-4S Mo/W bis-MGD-type domain is found at 39–95 (IHWDKAPCRFCGVGCGVLVGTQNGRIVASQGDPDAPVNRGLNCIKGYFLPKIMYGQD). [4Fe-4S] cluster is bound by residues C46, C49, C53, and C81. Mo-bis(molybdopterin guanine dinucleotide) is bound by residues K83, Q150, N175, C179, 212-219 (WGSNMAEM), 243-247 (STYQH), 262-264 (QTD), M372, Q376, N482, 508-509 (SD), K531, D558, and 718-727 (TGRVLEHWHT). F794 provides a ligand contact to substrate. Mo-bis(molybdopterin guanine dinucleotide) contacts are provided by N802 and K819.

Belongs to the prokaryotic molybdopterin-containing oxidoreductase family. NasA/NapA/NarB subfamily. As to quaternary structure, component of the periplasmic nitrate reductase NapAB complex composed of NapA and NapB. It depends on [4Fe-4S] cluster as a cofactor. Mo-bis(molybdopterin guanine dinucleotide) serves as cofactor. Post-translationally, predicted to be exported by the Tat system. The position of the signal peptide cleavage has not been experimentally proven.

It is found in the periplasm. The catalysed reaction is 2 Fe(II)-[cytochrome] + nitrate + 2 H(+) = 2 Fe(III)-[cytochrome] + nitrite + H2O. Catalytic subunit of the periplasmic nitrate reductase complex NapAB. Receives electrons from NapB and catalyzes the reduction of nitrate to nitrite. The chain is Periplasmic nitrate reductase from Pectobacterium carotovorum subsp. carotovorum (strain PC1).